Here is a 192-residue protein sequence, read N- to C-terminus: MKPALILASESPRRKQLLSEAGFSFDVVPVKVSEIPNKNLNVNDQILDIARRKASAALPLLKSSRQDAFIVLCADTEVIFNGAPLGKPADRQDAYRILKLLSGKYHEVITAVCLVESSTGKEVSQTETTKIYFRQLTDDEIWTYIDTGEPMDKAGAYGIQGQGGKFIERFDGPFYNVVGLPIDLVKNLLSKF.

Aspartate 75 acts as the Proton acceptor in catalysis.

This sequence belongs to the Maf family. YhdE subfamily. Requires a divalent metal cation as cofactor.

The protein localises to the cytoplasm. The enzyme catalyses dTTP + H2O = dTMP + diphosphate + H(+). The catalysed reaction is UTP + H2O = UMP + diphosphate + H(+). Functionally, nucleoside triphosphate pyrophosphatase that hydrolyzes dTTP and UTP. May have a dual role in cell division arrest and in preventing the incorporation of modified nucleotides into cellular nucleic acids. This is dTTP/UTP pyrophosphatase from Bdellovibrio bacteriovorus (strain ATCC 15356 / DSM 50701 / NCIMB 9529 / HD100).